A 91-amino-acid polypeptide reads, in one-letter code: Non-specific lipid-transfer protein 1 (91 aa).

Intrachain disulfides connect cysteine 3-cysteine 50, cysteine 13-cysteine 27, cysteine 28-cysteine 73, and cysteine 48-cysteine 87.

The protein belongs to the plant LTP family.

In terms of biological role, plant non-specific lipid-transfer proteins transfer phospholipids as well as galactolipids across membranes. May play a role in wax or cutin deposition in the cell walls of expanding epidermal cells and certain secretory tissues. This is Non-specific lipid-transfer protein 1 from Morus nigra (Black mulberry).